The following is a 673-amino-acid chain: eEF1A lysine and N-terminal methyltransferase homolog (673 aa).

Belongs to the methyltransferase superfamily.

It carries out the reaction L-lysyl-[protein] + S-adenosyl-L-methionine = N(6)-methyl-L-lysyl-[protein] + S-adenosyl-L-homocysteine + H(+). It catalyses the reaction N(6)-methyl-L-lysyl-[protein] + S-adenosyl-L-methionine = N(6),N(6)-dimethyl-L-lysyl-[protein] + S-adenosyl-L-homocysteine + H(+). The catalysed reaction is N-terminal glycyl-L-lysyl-L-glutamyl-[protein] + 3 S-adenosyl-L-methionine = N-terminal N,N,N-trimethyl-glycyl-L-lysyl-L-glutamyl-[protein] + 3 S-adenosyl-L-homocysteine + 3 H(+). Dual methyltransferase. It catalyzes N-terminal methylation of target proteins via its C-terminus. It catalyzes dimethylation on lysine residues of target proteins via its N-terminus. The chain is eEF1A lysine and N-terminal methyltransferase homolog from Drosophila pseudoobscura pseudoobscura (Fruit fly).